The primary structure comprises 213 residues: MSRHPEVKWAQRIDKVYITVQLADAKDAKVNLEPEGVFSFSATAGTDGNLYESKLELNDKVNVEESKISVGVRSIFCIVEKAEAKWWKKLVRDDQKAPHFVKVDWDKWVDEDDDGADVNVDGMDFSNFGGMGGMGGMGGMGDMMGGMGGMGGMGGMAEMMGGMGGMGGMGGMGGMDEFEDESDDEEEVSKPQDAEKAAEAGKSQESDAKAETS.

Residues 2–91 (SRHPEVKWAQ…AEAKWWKKLV (90 aa)) form the CS domain. Residues 168 to 213 (GMGGMGGMDEFEDESDDEEEVSKPQDAEKAAEAGKSQESDAKAETS) are disordered. The span at 176 to 187 (DEFEDESDDEEE) shows a compositional bias: acidic residues. Basic and acidic residues predominate over residues 188–213 (VSKPQDAEKAAEAGKSQESDAKAETS).

The protein belongs to the p23/wos2 family.

This is an uncharacterized protein from Oryza sativa subsp. japonica (Rice).